The following is a 312-amino-acid chain: Malate dehydrogenase 1 (312 aa).

Residues 11 to 16 and D35 contribute to the NAD(+) site; that span reads GAGQIG. The substrate site is built by R86 and R92. Residues N99 and 122 to 124 contribute to the NAD(+) site; that span reads ITN. Positions 124 and 155 each coordinate substrate. The active-site Proton acceptor is the H179.

It belongs to the LDH/MDH superfamily. MDH type 3 family.

It catalyses the reaction (S)-malate + NAD(+) = oxaloacetate + NADH + H(+). Its function is as follows. Catalyzes the reversible oxidation of malate to oxaloacetate. The chain is Malate dehydrogenase 1 from Anaeromyxobacter dehalogenans (strain 2CP-C).